The chain runs to 209 residues: Histidine biosynthesis bifunctional protein HisIE (209 aa).

Residues 1 to 123 (MEIEKLLEQV…VLPIDYSLSI (123 aa)) form a phosphoribosyl-AMP cyclohydrolase region. The segment at 124-209 (LKELEEIIKR…VMNELRRRRK (86 aa)) is phosphoribosyl-ATP pyrophosphohydrolase.

In the N-terminal section; belongs to the PRA-CH family. It in the C-terminal section; belongs to the PRA-PH family.

Its subcellular location is the cytoplasm. It catalyses the reaction 1-(5-phospho-beta-D-ribosyl)-ATP + H2O = 1-(5-phospho-beta-D-ribosyl)-5'-AMP + diphosphate + H(+). It carries out the reaction 1-(5-phospho-beta-D-ribosyl)-5'-AMP + H2O = 1-(5-phospho-beta-D-ribosyl)-5-[(5-phospho-beta-D-ribosylamino)methylideneamino]imidazole-4-carboxamide. Its pathway is amino-acid biosynthesis; L-histidine biosynthesis; L-histidine from 5-phospho-alpha-D-ribose 1-diphosphate: step 2/9. The protein operates within amino-acid biosynthesis; L-histidine biosynthesis; L-histidine from 5-phospho-alpha-D-ribose 1-diphosphate: step 3/9. This chain is Histidine biosynthesis bifunctional protein HisIE (hisI), found in Pyrococcus furiosus (strain ATCC 43587 / DSM 3638 / JCM 8422 / Vc1).